A 91-amino-acid polypeptide reads, in one-letter code: DNA-binding protein HU (91 aa).

The protein belongs to the bacterial histone-like protein family. In terms of assembly, homodimer.

Histone-like DNA-binding protein which is capable of wrapping DNA to stabilize it, and thus to prevent its denaturation under extreme environmental conditions. This Lactococcus lactis subsp. lactis (strain IL1403) (Streptococcus lactis) protein is DNA-binding protein HU (hup).